We begin with the raw amino-acid sequence, 805 residues long: Leucine--tRNA ligase (805 aa).

The short motif at 40–51 (PYPSGSGLHVGH) is the 'HIGH' region element. Positions 576-580 (KMSKS) match the 'KMSKS' region motif. An ATP-binding site is contributed by Lys-579.

Belongs to the class-I aminoacyl-tRNA synthetase family.

Its subcellular location is the cytoplasm. It carries out the reaction tRNA(Leu) + L-leucine + ATP = L-leucyl-tRNA(Leu) + AMP + diphosphate. The chain is Leucine--tRNA ligase from Chlorobium phaeovibrioides (strain DSM 265 / 1930) (Prosthecochloris vibrioformis (strain DSM 265)).